A 289-amino-acid polypeptide reads, in one-letter code: uncharacterized protein (289 aa).

The next 9 helical transmembrane spans lie at 4–24 (NLLA…GTVV), 44–64 (LNAL…LAYF), 68–88 (VALG…SLMF), 106–126 (IFWA…GRPL), 138–158 (IPVL…AEYV), 166–186 (ILGL…KAAV), 196–216 (GLIL…GTIV), 230–250 (LPAM…LVLG), and 258–278 (WEWI…IALS).

Its subcellular location is the cell membrane. This is an uncharacterized protein from Corynebacterium glutamicum (strain ATCC 13032 / DSM 20300 / JCM 1318 / BCRC 11384 / CCUG 27702 / LMG 3730 / NBRC 12168 / NCIMB 10025 / NRRL B-2784 / 534).